The primary structure comprises 627 residues: Hemocyanin D chain (627 aa).

H171, H175, H202, H322, H326, and H362 together coordinate Cu cation. N-linked (GlcNAc...) asparagine glycosylation is present at N445. An intrachain disulfide couples C531 to C579.

The protein belongs to the tyrosinase family. Hemocyanin subfamily. Tarantula hemocyanin is a 24-chain polymer with seven different chains identified. As to expression, hemolymph.

It is found in the secreted. It localises to the extracellular space. Functionally, hemocyanins are copper-containing oxygen carriers occurring freely dissolved in the hemolymph of many mollusks and arthropods. In Aphonopelma sp. (American tarantula), this protein is Hemocyanin D chain (HCD).